The primary structure comprises 164 residues: UPF0478 protein SSP1024 (164 aa).

A helical transmembrane segment spans residues 7-27 (IAGIIAAVAFLILVIGIVVVL). Residues 136–164 (RNRRDSANYKTSSVANETNHSYTTRVDNK) are disordered. The span at 143–164 (NYKTSSVANETNHSYTTRVDNK) shows a compositional bias: polar residues.

This sequence belongs to the UPF0478 family.

The protein resides in the cell membrane. This chain is UPF0478 protein SSP1024, found in Staphylococcus saprophyticus subsp. saprophyticus (strain ATCC 15305 / DSM 20229 / NCIMB 8711 / NCTC 7292 / S-41).